We begin with the raw amino-acid sequence, 74 residues long: ATP synthase subunit c (74 aa).

2 helical membrane-spanning segments follow: residues 8-28 (FIGI…VSNI) and 52-72 (IGAG…MLLI).

This sequence belongs to the ATPase C chain family. F-type ATPases have 2 components, F(1) - the catalytic core - and F(0) - the membrane proton channel. F(1) has five subunits: alpha(3), beta(3), gamma(1), delta(1), epsilon(1). F(0) has three main subunits: a(1), b(2) and c(10-14). The alpha and beta chains form an alternating ring which encloses part of the gamma chain. F(1) is attached to F(0) by a central stalk formed by the gamma and epsilon chains, while a peripheral stalk is formed by the delta and b chains.

Its subcellular location is the cell inner membrane. F(1)F(0) ATP synthase produces ATP from ADP in the presence of a proton or sodium gradient. F-type ATPases consist of two structural domains, F(1) containing the extramembraneous catalytic core and F(0) containing the membrane proton channel, linked together by a central stalk and a peripheral stalk. During catalysis, ATP synthesis in the catalytic domain of F(1) is coupled via a rotary mechanism of the central stalk subunits to proton translocation. In terms of biological role, key component of the F(0) channel; it plays a direct role in translocation across the membrane. A homomeric c-ring of between 10-14 subunits forms the central stalk rotor element with the F(1) delta and epsilon subunits. In Rickettsia akari (strain Hartford), this protein is ATP synthase subunit c.